The following is a 138-amino-acid chain: Large ribosomal subunit protein uL16 (138 aa).

Over residues 1 to 13 the composition is skewed to basic residues; the sequence is MLQPARRKFRKEQ. The interval 1-22 is disordered; that stretch reads MLQPARRKFRKEQKGRNTGLAT.

It belongs to the universal ribosomal protein uL16 family. In terms of assembly, part of the 50S ribosomal subunit.

In terms of biological role, binds 23S rRNA and is also seen to make contacts with the A and possibly P site tRNAs. This Thiobacillus denitrificans (strain ATCC 25259 / T1) protein is Large ribosomal subunit protein uL16.